Reading from the N-terminus, the 441-residue chain is Asparagine--tRNA ligase, mitochondrial (441 aa).

This sequence belongs to the class-II aminoacyl-tRNA synthetase family.

Its subcellular location is the mitochondrion. It carries out the reaction tRNA(Asn) + L-asparagine + ATP = L-asparaginyl-tRNA(Asn) + AMP + diphosphate + H(+). This Schizosaccharomyces pombe (strain 972 / ATCC 24843) (Fission yeast) protein is Asparagine--tRNA ligase, mitochondrial (slm5).